Reading from the N-terminus, the 434-residue chain is Pyrichalasin H cluster regulator BC2 (434 aa).

Disordered stretches follow at residues 297–321 and 362–383; these read GSSP…CSPL and HPGH…RLSH. The span at 298–309 shows a compositional bias: polar residues; that stretch reads SSPSGTPESELT. The span at 362–380 shows a compositional bias: basic and acidic residues; the sequence is HPGHEDHQQQQEEVKQHDR.

It localises to the nucleus. Transcription factor probably involved in regulation of gene cluster that mediates the biosynthesis of a tyrosine-derived cytochalasan acting as a fungal signal recognized by resistant rice plants and leads to avirulence in Pi33 resistant rice cultivars. The polypeptide is Pyrichalasin H cluster regulator BC2 (Pyricularia oryzae (strain 70-15 / ATCC MYA-4617 / FGSC 8958) (Rice blast fungus)).